We begin with the raw amino-acid sequence, 129 residues long: MADGDKAAIQFFRGTDEPVVPDIRLTRSRDGRTGQATFIFEQPEALAPETLGNIAGMWMVDEEGELVTREVNGKFVNGKPSALEATYTWKTEQDFERFMRFAERYAETKGLGYSNNSGNNEGADEASEG.

Positions 110-129 (GLGYSNNSGNNEGADEASEG) are disordered.

This sequence belongs to the Psb28 family. As to quaternary structure, part of the photosystem II complex.

The protein localises to the cellular thylakoid membrane. This chain is Photosystem II reaction center Psb28 protein, found in Synechococcus sp. (strain WH7803).